The sequence spans 432 residues: MVSEQIIDISGPLKGEIEVPGDKSMTHRAIMLASLAEGTSNIYKPLLGEDCRRTMDIFRLLGVDIKEDEDKLVVNSPGYKAFKTPHQVLYTGNSGTTTRLLAGLLSGLGIESVLSGDVSIGKRPMDRVLRPLKLMDANIEGIEDNYTPLIIKPSVIKGINYQMEVASAQVKSAILFASLFSNDTTVIKELDVSRNHTETMFRHFNIPIEAERLSITTTPDAIQHIKPADFHVPGDISSAAFFIVAALITPESDVTIHNVGINPTRSGIIDIVEKMGGNIQLFNQTTGAEPTASIRIQYTPMLQPITIEGELVTKAIDELPVIALLCTQAVGTSTIKDAEELKVKETNRIDTTADMLNLLGFELQPTNDGLIIHPSEFKTNATVDSLTDHRIGMMLAVASLLSSEPVKIKQFDAVNVSFPGFLPKLKLLENEG.

3-phosphoshikimate contacts are provided by lysine 23, serine 24, and arginine 28. Lysine 23 contacts phosphoenolpyruvate. Positions 95 and 123 each coordinate phosphoenolpyruvate. 3-phosphoshikimate is bound by residues serine 167, glutamine 169, aspartate 317, and lysine 344. Glutamine 169 provides a ligand contact to phosphoenolpyruvate. Aspartate 317 acts as the Proton acceptor in catalysis. Phosphoenolpyruvate-binding residues include arginine 348 and arginine 390.

Belongs to the EPSP synthase family. As to quaternary structure, monomer.

The protein resides in the cytoplasm. It catalyses the reaction 3-phosphoshikimate + phosphoenolpyruvate = 5-O-(1-carboxyvinyl)-3-phosphoshikimate + phosphate. It participates in metabolic intermediate biosynthesis; chorismate biosynthesis; chorismate from D-erythrose 4-phosphate and phosphoenolpyruvate: step 6/7. Functionally, catalyzes the transfer of the enolpyruvyl moiety of phosphoenolpyruvate (PEP) to the 5-hydroxyl of shikimate-3-phosphate (S3P) to produce enolpyruvyl shikimate-3-phosphate and inorganic phosphate. This chain is 3-phosphoshikimate 1-carboxyvinyltransferase, found in Staphylococcus aureus (strain JH9).